We begin with the raw amino-acid sequence, 166 residues long: Kelch repeat protein B10 (166 aa).

Kelch repeat units lie at residues 25 to 76 (TIFV…STFG) and 77 to 129 (MLYF…KLNN).

Belongs to the poxviruses Kelch family.

The protein is Kelch repeat protein B10 of Oryctolagus cuniculus (Rabbit).